Reading from the N-terminus, the 454-residue chain is SH2 domain-containing protein 4A (454 aa).

Disordered stretches follow at residues 45–65 (AMERKESLPVKPRPKKENGKS), 107–131 (EQEAEEPRKTHSEEFTNSLKTKSQY), 152–177 (KEELEQGSRPAPTLEEEKIRSLSSSS), and 237–302 (RKSK…AYPQ). Over residues 107–120 (EQEAEEPRKTHSEE) the composition is skewed to basic and acidic residues. Residues Ser118 and Ser124 each carry the phosphoserine modification. Positions 240 to 259 (KAADEKRRSLAKQAREDYKR) are enriched in basic and acidic residues. Ser261 and Ser315 each carry phosphoserine. The SH2 domain maps to 347–440 (WFHGILTLKK…LGKELLLYPC (94 aa)).

As to quaternary structure, interacts with ESR1. In terms of tissue distribution, ubiquitously expressed. Aberrantly expressed in some cancers.

The protein localises to the cytoplasm. Functionally, inhibits estrogen-induced cell proliferation by competing with PLCG for binding to ESR1, blocking the effect of estrogen on PLCG and repressing estrogen-induced proliferation. May play a role in T-cell development and function. The chain is SH2 domain-containing protein 4A (SH2D4A) from Homo sapiens (Human).